Consider the following 72-residue polypeptide: Translation initiation factor IF-1 (72 aa).

Residues 1-72 (MAKDDVIEID…DKGRITFRYK (72 aa)) enclose the S1-like domain.

This sequence belongs to the IF-1 family. Component of the 30S ribosomal translation pre-initiation complex which assembles on the 30S ribosome in the order IF-2 and IF-3, IF-1 and N-formylmethionyl-tRNA(fMet); mRNA recruitment can occur at any time during PIC assembly.

Its subcellular location is the cytoplasm. In terms of biological role, one of the essential components for the initiation of protein synthesis. Stabilizes the binding of IF-2 and IF-3 on the 30S subunit to which N-formylmethionyl-tRNA(fMet) subsequently binds. Helps modulate mRNA selection, yielding the 30S pre-initiation complex (PIC). Upon addition of the 50S ribosomal subunit IF-1, IF-2 and IF-3 are released leaving the mature 70S translation initiation complex. This chain is Translation initiation factor IF-1, found in Campylobacter jejuni subsp. doylei (strain ATCC BAA-1458 / RM4099 / 269.97).